A 355-amino-acid chain; its full sequence is RNA binding protein fox-1 homolog 1 (355 aa).

The segment at Met1–Ile123 is disordered. Residues Gln70 to Lys112 are compositionally biased toward polar residues. The region spanning Lys116–Ala174 is the RRM domain. Arg298 carries the asymmetric dimethylarginine modification.

Binds to the C-terminus of ATXN2.

Its subcellular location is the nucleus. It localises to the cytoplasm. Its function is as follows. RNA-binding protein that regulates alternative splicing events by binding to 5'-UGCAUGU-3' elements. Prevents binding of U2AF2 to the 3'-splice site. Regulates alternative splicing of tissue-specific exons and of differentially spliced exons during erythropoiesis. This Bos taurus (Bovine) protein is RNA binding protein fox-1 homolog 1 (RBFOX1).